The sequence spans 335 residues: Anthranilate phosphoribosyltransferase (335 aa).

5-phospho-alpha-D-ribose 1-diphosphate is bound by residues G79, 82-83 (GD), T87, 89-92 (NVST), 107-115 (KHCNKGVSS), and S119. G79 is an anthranilate binding site. S91 contributes to the Mg(2+) binding site. Anthranilate is bound at residue N110. R165 contributes to the anthranilate binding site. Residues D223 and E224 each contribute to the Mg(2+) site.

The protein belongs to the anthranilate phosphoribosyltransferase family. In terms of assembly, homodimer. It depends on Mg(2+) as a cofactor.

The catalysed reaction is N-(5-phospho-beta-D-ribosyl)anthranilate + diphosphate = 5-phospho-alpha-D-ribose 1-diphosphate + anthranilate. It functions in the pathway amino-acid biosynthesis; L-tryptophan biosynthesis; L-tryptophan from chorismate: step 2/5. Functionally, catalyzes the transfer of the phosphoribosyl group of 5-phosphorylribose-1-pyrophosphate (PRPP) to anthranilate to yield N-(5'-phosphoribosyl)-anthranilate (PRA). This Buchnera aphidicola subsp. Schizaphis graminum (strain Sg) protein is Anthranilate phosphoribosyltransferase.